A 900-amino-acid polypeptide reads, in one-letter code: Phosphoenolpyruvate carboxylase (900 aa).

Residues His-140 and Lys-568 contribute to the active site.

This sequence belongs to the PEPCase type 1 family. The cofactor is Mg(2+).

The enzyme catalyses oxaloacetate + phosphate = phosphoenolpyruvate + hydrogencarbonate. Functionally, forms oxaloacetate, a four-carbon dicarboxylic acid source for the tricarboxylic acid cycle. The chain is Phosphoenolpyruvate carboxylase from Neisseria meningitidis serogroup C / serotype 2a (strain ATCC 700532 / DSM 15464 / FAM18).